The sequence spans 434 residues: Probable glucuronosyltransferase Os02g0520750 (434 aa).

At 1–10 the chain is on the cytoplasmic side; the sequence is MVGARAGRVP. Residues 11 to 31 traverse the membrane as a helical; Signal-anchor for type II membrane protein segment; it reads AAAAAAAAVLIVAACVFSSLA. The Lumenal segment spans residues 32-434; it reads GAAAAAEVVG…GPVADLKPWK (403 aa). Residues asparagine 160 and asparagine 421 are each glycosylated (N-linked (GlcNAc...) asparagine).

It belongs to the glycosyltransferase 47 family.

The protein resides in the golgi apparatus membrane. Its function is as follows. Involved in the synthesis of glucuronoxylan hemicellulose in secondary cell walls. The polypeptide is Probable glucuronosyltransferase Os02g0520750 (Oryza sativa subsp. japonica (Rice)).